Here is a 115-residue protein sequence, read N- to C-terminus: Large ribosomal subunit protein bL19 (115 aa).

Belongs to the bacterial ribosomal protein bL19 family.

In terms of biological role, this protein is located at the 30S-50S ribosomal subunit interface and may play a role in the structure and function of the aminoacyl-tRNA binding site. This chain is Large ribosomal subunit protein bL19, found in Streptococcus pneumoniae serotype 2 (strain D39 / NCTC 7466).